The chain runs to 154 residues: D-aminoacyl-tRNA deacylase (154 aa).

A Gly-cisPro motif, important for rejection of L-amino acids motif is present at residues Gly-142–Pro-143.

Belongs to the DTD family. Homodimer.

The protein resides in the cytoplasm. It catalyses the reaction glycyl-tRNA(Ala) + H2O = tRNA(Ala) + glycine + H(+). The enzyme catalyses a D-aminoacyl-tRNA + H2O = a tRNA + a D-alpha-amino acid + H(+). An aminoacyl-tRNA editing enzyme that deacylates mischarged D-aminoacyl-tRNAs. Also deacylates mischarged glycyl-tRNA(Ala), protecting cells against glycine mischarging by AlaRS. Acts via tRNA-based rather than protein-based catalysis; rejects L-amino acids rather than detecting D-amino acids in the active site. By recycling D-aminoacyl-tRNA to D-amino acids and free tRNA molecules, this enzyme counteracts the toxicity associated with the formation of D-aminoacyl-tRNA entities in vivo and helps enforce protein L-homochirality. In Acidovorax sp. (strain JS42), this protein is D-aminoacyl-tRNA deacylase.